The primary structure comprises 351 residues: Flagellin (351 aa).

It belongs to the bacterial flagellin family.

The protein localises to the secreted. The protein resides in the bacterial flagellum. Functionally, flagellin is the subunit protein which polymerizes to form the filaments of bacterial flagella. The protein is Flagellin (fliC) of Serratia marcescens.